A 432-amino-acid polypeptide reads, in one-letter code: Mitochondrial distribution and morphology protein 12 (432 aa).

Residues 1–432 (MSIEVDWRAA…VFPSFWTFLI (432 aa)) enclose the SMP-LTD domain. Disordered regions lie at residues 182–273 (WTDP…PRMR) and 354–377 (QQEARGQDDRPWSSADPTASPKRQ). Low complexity predominate over residues 214 to 234 (TSNPTSRPSTSSTLPSHPSAS). 2 stretches are compositionally biased toward basic and acidic residues: residues 243 to 253 (TGKEHGSLAED) and 355 to 364 (QEARGQDDRP).

It belongs to the MDM12 family. Component of the ER-mitochondria encounter structure (ERMES) or MDM complex, composed of mmm1, mdm10, mdm12 and mdm34. A mmm1 homodimer associates with one molecule of mdm12 on each side in a pairwise head-to-tail manner, and the SMP-LTD domains of mmm1 and mdm12 generate a continuous hydrophobic tunnel for phospholipid trafficking.

The protein resides in the mitochondrion outer membrane. Its subcellular location is the endoplasmic reticulum membrane. Functionally, component of the ERMES/MDM complex, which serves as a molecular tether to connect the endoplasmic reticulum (ER) and mitochondria. Components of this complex are involved in the control of mitochondrial shape and protein biogenesis, and function in nonvesicular lipid trafficking between the ER and mitochondria. Mdm12 is required for the interaction of the ER-resident membrane protein MMM1 and the outer mitochondrial membrane-resident beta-barrel protein mdm10. The mdm12-mmm1 subcomplex functions in the major beta-barrel assembly pathway that is responsible for biogenesis of all mitochondrial outer membrane beta-barrel proteins, and acts in a late step after the SAM complex. The mdm10-mdm12-mmm1 subcomplex further acts in the TOM40-specific pathway after the action of the mdm12-mmm1 complex. Essential for establishing and maintaining the structure of mitochondria and maintenance of mtDNA nucleoids. This Aspergillus flavus (strain ATCC 200026 / FGSC A1120 / IAM 13836 / NRRL 3357 / JCM 12722 / SRRC 167) protein is Mitochondrial distribution and morphology protein 12.